A 494-amino-acid chain; its full sequence is Lysine--tRNA ligase (494 aa).

E405 and E412 together coordinate Mg(2+).

The protein belongs to the class-II aminoacyl-tRNA synthetase family. In terms of assembly, homodimer. Mg(2+) is required as a cofactor.

The protein resides in the cytoplasm. It catalyses the reaction tRNA(Lys) + L-lysine + ATP = L-lysyl-tRNA(Lys) + AMP + diphosphate. The protein is Lysine--tRNA ligase (lysS) of Geobacillus stearothermophilus (Bacillus stearothermophilus).